A 245-amino-acid chain; its full sequence is Uridylate kinase (245 aa).

15-18 (KLSG) provides a ligand contact to ATP. The segment at 23–28 (GDEGFG) is involved in allosteric activation by GTP. Gly57 is a UMP binding site. ATP contacts are provided by Gly58 and Arg62. UMP-binding positions include Asp77 and 138–145 (TGNPFCTT). ATP-binding residues include Thr165, Tyr171, and Asp174.

This sequence belongs to the UMP kinase family. Homohexamer.

The protein resides in the cytoplasm. It carries out the reaction UMP + ATP = UDP + ADP. The protein operates within pyrimidine metabolism; CTP biosynthesis via de novo pathway; UDP from UMP (UMPK route): step 1/1. Allosterically activated by GTP. Inhibited by UTP. Its function is as follows. Catalyzes the reversible phosphorylation of UMP to UDP. This chain is Uridylate kinase, found in Shewanella sp. (strain W3-18-1).